We begin with the raw amino-acid sequence, 433 residues long: Hps1-dma1 cluster O-methyltransferase (433 aa).

The interval 36-55 (NGHPERSLNSTDSVRLSDAP) is disordered. Residue Asp-285 participates in S-adenosyl-L-methionine binding. His-331 (proton acceptor) is an active-site residue.

Belongs to the class I-like SAM-binding methyltransferase superfamily. Cation-independent O-methyltransferase family. COMT subfamily.

The protein operates within secondary metabolite biosynthesis. In terms of biological role, O-methyltransferase; part of the hps1-dma1 gene cluster that probably mediates the biosynthesis a derivative of cyclopiazonic acid (CPA). The hybrid polyketide synthase-nonribosomal peptide synthetase (PKS-NRPS) nps1 might incorporates acetyl-CoA, malonyl-CoA, and tryptophan (Trp) and utilizes a C-terminal redox-incompetent reductase domain to make and release the tryptophan tetramic acid, cyclo-acetoacetyl-L-tryptophan (c-AATrp), as the first intermediate in the pathway. In addition, the cluster also includes the tryptophan dimethylallyltransferase dma1, the FAD-dependent oxidoreductase toxD, the cytochrome P450 monooxygenase cyp3.1 and the methyltransferase DOTSEDRAFT_139328; the latter 2 being not present in all CPA-producing fungi but involved in additional modifications that occur in biosynthesis the of a range of CPA and CPA-like products. Further studies are required to clarify whether the CPA-like hps1-dma1 cluster is functional or a non-functional relic reflecting evolution of D.septosporum. This is Hps1-dma1 cluster O-methyltransferase from Dothistroma septosporum (strain NZE10 / CBS 128990) (Red band needle blight fungus).